Consider the following 734-residue polypeptide: Exonuclease 1 (734 aa).

Positions 1-99 (MGIQGLLQFL…KARREKRQTN (99 aa)) are N-domain. Mg(2+) is bound by residues D30, D78, E150, D152, D171, D173, and D225. An I-domain region spans residues 138 to 229 (RSEGVDYIVA…ILSGCDYLPS (92 aa)). Disordered regions lie at residues 599–650 (EAEN…CQFT), 656–675 (AHQSFFPEPKGSAPKSKVPG), and 685–716 (GLRTKVKPRAPAKVSGLTNRSNTKATRNNENV). Over residues 604 to 620 (PSWQSSCIKSDTVSQID) the composition is skewed to polar residues. Residues 621–641 (SNEKLLKKQDIEDTDSDEHAS) show a composition bias toward basic and acidic residues. Over residues 700–715 (GLTNRSNTKATRNNEN) the composition is skewed to polar residues.

This sequence belongs to the XPG/RAD2 endonuclease family. EXO1 subfamily. The cofactor is Mg(2+).

The protein resides in the nucleus. In terms of biological role, 5'-&gt;3' double-stranded DNA exonuclease which may also contain a cryptic 3'-&gt;5' double-stranded DNA exonuclease activity. Also exhibits endonuclease activity against 5'-overhanging flap structures similar to those generated by displacement synthesis when DNA polymerase encounters the 5'-end of a downstream Okazaki fragment. Required for DNA mismatch repair (MMR). In Xenopus laevis (African clawed frog), this protein is Exonuclease 1 (exo1).